The primary structure comprises 164 residues: Heat shock protein beta-6 (164 aa).

Residues 1 to 72 form an involved in stabilization of the HSPB1:HSBP6 heterodimer region; the sequence is MEIPVSVQPS…PTAQVSTDPG (72 aa). Phosphoserine is present on Ser16. The sHSP domain occupies 56 to 163; the sequence is RAPSVALPTA…PLQSPPGAAA (108 aa). Gln66 is modified (deamidated glutamine). Position 157 is a phosphoserine (Ser157).

This sequence belongs to the small heat shock protein (HSP20) family. Homodimer. Small heat shock proteins form high molecular mass oligomers containing variable number of monomers; these oligomers display a very flexible quaternary structure easily exchanging their subunits. Heterooligomer with HSPB1; formed through oligomerization of HSPB1:HSBP6 dimers; subunit exchange leads to formation of at least two different heterooligomeric complexes, differing in variable quantities of HSPB1 and HSPB6 homodimers in addition to HSPB1:HSPB6 heterodimers. Heterooligomer with CRYAB; large heterooligomers consist of CRYAB homodimers and HSPB5:HSPB6 heterodimers but lacking HSPB6 homodimers. Interacts with BAG3. Interacts (phosphorylated) with YWHAZ. Interacts with PDE4A and PDE4D; required for maintenance of the non-phosphorylated state of HSPB6 under basal conditions. Interacts with KDR. Interacts with PRKD1. Post-translationally, phosphorylated at Ser-16 by PKA and probably PKD1K; required to protect cardiomyocytes from apoptosis.

The protein resides in the cytoplasm. Its subcellular location is the nucleus. It localises to the secreted. Small heat shock protein which functions as a molecular chaperone probably maintaining denatured proteins in a folding-competent state. Seems to have versatile functions in various biological processes. Plays a role in regulating muscle function such as smooth muscle vasorelaxation and cardiac myocyte contractility. May regulate myocardial angiogenesis implicating KDR. Overexpression mediates cardioprotection and angiogenesis after induced damage. Stabilizes monomeric YWHAZ thereby supporting YWHAZ chaperone-like activity. The sequence is that of Heat shock protein beta-6 (HSPB6) from Bos taurus (Bovine).